The chain runs to 548 residues: Probable aquaglyceroporin-4 (548 aa).

A compositionally biased stretch (polar residues) spans 1–22 (MAGTQDQSQDYFSKPTTPSTPG). Disordered stretches follow at residues 1-63 (MAGT…LPST), 76-101 (SRGF…SHFH), and 158-270 (KEET…ESGD). Residues 1-290 (MAGTQDQSQD…ARLRARHPEP (290 aa)) are Cytoplasmic-facing. The segment covering 38 to 48 (PDRESGTERAK) has biased composition (basic and acidic residues). Composition is skewed to polar residues over residues 77–97 (RGFS…PQHS) and 171–200 (SRTT…SRTT). A compositionally biased stretch (basic and acidic residues) spans 249-265 (PDFKVDGEPLGHQEKPC). Residues 291–311 (LAEFLATAVAIFLGLTGTLSV) traverse the membrane as a helical segment. Asn312 carries N-linked (GlcNAc...) asparagine glycosylation. At 312–327 (NLSATQSQPYGTYETS) the chain is on the extracellular side. The chain crosses the membrane as a helical span at residues 328 to 348 (CWAWGFAWMFGIYLGGGVSGA). Over 349 to 369 (HMNPAISVSLSIFRGFPWRQC) the chain is Cytoplasmic. Residues 351-353 (NPA) carry the NPA 1 motif. The chain crosses the membrane as a helical span at residues 370–390 (VIYVFVQFIASIVAGALAYAM). Topologically, residues 391-420 (YADSINHVDPDMTKMSMTFFSTPREWVTLK) are extracellular. Residues 421–441 (SAFFNQVVGSAIMMIAVFALG) traverse the membrane as a helical segment. Residues 442-448 (DDQNNPP) lie on the Cytoplasmic side of the membrane. Residues 449-469 (GAGMHALVLGFLVTTLKFTLG) form a helical membrane-spanning segment. Topologically, residues 470 to 508 (YNIGSALNPASDFGPRVIAYAVGFRGDNVFHSGWWFYGP) are extracellular. An NPA 2 motif is present at residues 477-479 (NPA). The helical transmembrane segment at 509-529 (WAATLIGSLLGCTLYDGFVFV) threads the bilayer. The Cytoplasmic portion of the chain corresponds to 530-548 (GSESPVNFRVDKRVKKLFN).

Belongs to the MIP/aquaporin (TC 1.A.8) family.

The protein localises to the membrane. It catalyses the reaction H2O(in) = H2O(out). It carries out the reaction glycerol(in) = glycerol(out). Probable water/glycerol channel that may have redundant functions with FgAQP2. The sequence is that of Probable aquaglyceroporin-4 from Gibberella zeae (strain ATCC MYA-4620 / CBS 123657 / FGSC 9075 / NRRL 31084 / PH-1) (Wheat head blight fungus).